The primary structure comprises 1026 residues: Multidrug resistance protein MdtC (1026 aa).

11 consecutive transmembrane segments (helical) span residues 15–35 (ILIAAAITLCGILGFRLLPVA), 333–353 (EVEETLAISVALVIMVVFLFL), 360–380 (LIPAVAVPVSLIGTFAAMYLC), 387–407 (LSLMALTIATGFVVDDAIVVL), 431–451 (VGFTVISMSLSLVAVFLPLLL), 463–483 (FAVTLSVAIGISLVVSLTLTP), 528–548 (LVGVVFLGTVALNIWLYIAIP), 853–873 (LILIVAAIATVYIVLGILYES), 897–917 (LFNAPFSLIALIGIMLLIGIV), 953–973 (PIMMTTLAALFGALPLVLSGG), and 984–1004 (ITIVGGLVMSQLLTLYTTPVV).

This sequence belongs to the resistance-nodulation-cell division (RND) (TC 2.A.6) family. MdtC subfamily. In terms of assembly, part of a tripartite efflux system composed of MdtA, MdtB and MdtC. MdtC forms a heteromultimer with MdtB.

The protein resides in the cell inner membrane. The protein is Multidrug resistance protein MdtC of Salmonella paratyphi C (strain RKS4594).